We begin with the raw amino-acid sequence, 63 residues long: Large ribosomal subunit protein uL29 (63 aa).

Belongs to the universal ribosomal protein uL29 family.

The protein is Large ribosomal subunit protein uL29 of Photorhabdus laumondii subsp. laumondii (strain DSM 15139 / CIP 105565 / TT01) (Photorhabdus luminescens subsp. laumondii).